A 505-amino-acid chain; its full sequence is MAALIQTIHGGVVVTRTLTLVYPSTFTSRHKALNQMTSSSNSGLRRFLFTPPQRLSQGICYWGAELSNNVSWTYKTKMVVRSKAGAVPLMKHGDRFLSSLSSPALAGDPSAINRHIKKFVAASPKSVALNVLSHLLSDQTSHPHLSFFALSLYSEITEASWFDWNPKLIAELIALLNKQERFDESETLLSTAVSRLKSNERDFTLFLCNLVESNSKQGSIQGFSEASFRLREIIQRSSSVYVKTQAYKSMVSGLCNMDQPHDAERVIEEMRMEKIKPGLFEYKSVLYGYGRLGLFDDMNRVVHRMGTEGHKIDTVCSNMVLSSYGAHDALPQMGSWLQKLKGFNVPFSIRTYNSVLNSCPTIISMLKDLDSCPVSLSELRTFLNEDEALLVHELTQSSVLDEAIEWNAVEGKLDLHGMHLSSSYLILLQWMDETRLRFSEEKCVIPAEIVVVSGSGKHSNVRGESPVKALVKKIMVRTGSPMRIDRKNVGSFIAKGKTVKEWLCK.

PPR repeat units lie at residues 243–277, 278–312, and 313–347; these read KTQAYKSMVSGLCNMDQPHDAERVIEEMRMEKIKP, GLFEYKSVLYGYGRLGLFDDMNRVVHRMGTEGHKI, and DTVCSNMVLSSYGAHDALPQMGSWLQKLKGFNVPF. In terms of domain architecture, Smr spans 413–503; the sequence is LDLHGMHLSS…AKGKTVKEWL (91 aa).

The protein belongs to the PPR family. P subfamily.

This chain is Pentatricopeptide repeat-containing protein At2g17033, found in Arabidopsis thaliana (Mouse-ear cress).